Here is a 475-residue protein sequence, read N- to C-terminus: Protein transport protein Sec61 subunit alpha (475 aa).

10 consecutive transmembrane segments (helical) span residues 33 to 53 (LWTA…LFGI), 76 to 96 (LMEL…LLAG), 118 to 138 (LFGM…GMYG), 145 to 165 (AGIC…VLLL), 173 to 193 (YGLG…TIVW), 241 to 261 (NLMN…FQGF), 289 to 309 (IPII…QMLA), 354 to 374 (FLDP…CAFF), 420 to 440 (AAFG…IGAI), and 441 to 461 (GSGT…EIFV).

It belongs to the SecY/SEC61-alpha family. As to quaternary structure, the SEC61 channel-forming translocon complex consists of channel-forming core components SEC61A1, SEC61B and SEC61G and different auxiliary components such as SEC62 and SEC63. The SEC61 channel associates with the multi-pass translocon (MPT) complex. Expressed predominantly in epidermal cells of the embryo.

Its subcellular location is the endoplasmic reticulum membrane. Its function is as follows. Component of SEC61 channel-forming translocon complex that mediates transport of signal peptide-containing precursor polypeptides across the endoplasmic reticulum (ER). Forms a ribosome receptor and a gated pore in the ER membrane, both functions required for cotranslational translocation of nascent polypeptides. May cooperate with auxiliary protein SEC62, SEC63 and HSPA5/BiP to enable post-translational transport of small presecretory proteins. The SEC61 channel is also involved in ER membrane insertion of transmembrane proteins: it mediates membrane insertion of the first few transmembrane segments of proteins, while insertion of subsequent transmembrane regions of multi-pass membrane proteins is mediated by the multi-pass translocon (MPT) complex. The polypeptide is Protein transport protein Sec61 subunit alpha (Halocynthia roretzi (Sea squirt)).